The primary structure comprises 377 residues: Tryptophan 2,3-dioxygenase (377 aa).

Substrate-binding positions include 57 to 61 (FIITH) and R128. Heme is bound at residue H313. T328 is a binding site for substrate.

It belongs to the tryptophan 2,3-dioxygenase family. Homotetramer. Dimer of dimers. Requires heme as cofactor.

It carries out the reaction L-tryptophan + O2 = N-formyl-L-kynurenine. It functions in the pathway amino-acid degradation; L-tryptophan degradation via kynurenine pathway; L-kynurenine from L-tryptophan: step 1/2. It participates in pigment biosynthesis; ommochrome biosynthesis. Heme-dependent dioxygenase that catalyzes the oxidative cleavage of the L-tryptophan (L-Trp) pyrrole ring and converts L-tryptophan to N-formyl-L-kynurenine. Catalyzes the oxidative cleavage of the indole moiety. The chain is Tryptophan 2,3-dioxygenase from Drosophila grimshawi (Hawaiian fruit fly).